A 367-amino-acid polypeptide reads, in one-letter code: Histidinol-phosphate aminotransferase 1 (367 aa).

Lys-226 carries the N6-(pyridoxal phosphate)lysine modification.

The protein belongs to the class-II pyridoxal-phosphate-dependent aminotransferase family. Histidinol-phosphate aminotransferase subfamily. In terms of assembly, homodimer. Pyridoxal 5'-phosphate is required as a cofactor.

The enzyme catalyses L-histidinol phosphate + 2-oxoglutarate = 3-(imidazol-4-yl)-2-oxopropyl phosphate + L-glutamate. It functions in the pathway amino-acid biosynthesis; L-histidine biosynthesis; L-histidine from 5-phospho-alpha-D-ribose 1-diphosphate: step 7/9. The sequence is that of Histidinol-phosphate aminotransferase 1 (hisC1) from Haemophilus influenzae (strain ATCC 51907 / DSM 11121 / KW20 / Rd).